The primary structure comprises 3763 residues: Colossin-B (3763 aa).

The signal sequence occupies residues 1–19; that stretch reads MKGSIFLLFIFQIFKFSSS. N-linked (GlcNAc...) asparagine glycosylation is found at N43, N110, N258, and N284. In terms of domain architecture, Follistatin-like 1 spans 619-643; that stretch reads DCSTLQCPSGYECKLDKNSKTRGCI. N-linked (GlcNAc...) asparagine glycosylation is found at N652 and N672. Follistatin-like domains are found at residues 701-724 and 729-752; these read HCRN…PRCF and PCEF…AKCF. The disordered stretch occupies residues 792 to 832; it reads PPIFYETPSPTSAPPTETPSPTDTPTDKPTIPPTPTPTPSK. Residues 810–820 show a composition bias toward low complexity; sequence PSPTDTPTDKP. N-linked (GlcNAc...) asparagine glycans are attached at residues N845 and N991. 2 disordered regions span residues 1033–1068 and 1095–1124; these read LGSS…SESS and PQPT…PTST. The segment covering 1036–1051 has biased composition (gly residues); the sequence is SGSGSSGNSGSSGSGG. 2 stretches are compositionally biased toward low complexity: residues 1052–1068 and 1099–1124; these read SSND…SESS and PSTD…PTST. N-linked (GlcNAc...) asparagine glycosylation occurs at N1054. The CNA-B 1 domain occupies 1159–1227; sequence VSGVEITLIQ…LLNKYPIDTS (69 aa). 2 N-linked (GlcNAc...) asparagine glycosylation sites follow: N1229 and N1247. The CNA-B 2 domain maps to 1304-1373; sequence IKGIQVTLKD…VYTMDTFQLS (70 aa). An N-linked (GlcNAc...) asparagine glycan is attached at N1381. CNA-B domains follow at residues 1437-1515, 1582-1648, and 1731-1809; these read LPGV…IDTK, VPGI…LTLD, and VGGV…FTLS. Residues N1769 and N1815 are each glycosylated (N-linked (GlcNAc...) asparagine). The interval 1883-1955 is disordered; the sequence is GSTVDGGTSV…SEQPPEDSME (73 aa). A compositionally biased stretch (low complexity) spans 1898 to 1948; the sequence is STSTTTVSSSPSSSSDIGSSSDISSEVSSSLSSSPSSSEQPSEQSSSSSEQ. Residues 2015-2083 form the CNA-B 6 domain; the sequence is VPDVTVTLVN…DPLSGKIDFN (69 aa). 21 N-linked (GlcNAc...) asparagine glycosylation sites follow: N2128, N2145, N2243, N2294, N2351, N2378, N2453, N2493, N2496, N2516, N2572, N2601, N2624, N2668, N2698, N2714, N2781, N2787, N2800, N2838, and N2858. One can recognise a CNA-B 7 domain in the interval 2143-2197; sequence FPNITVRLFDQNLQPVLDNFNIQVEPTVTNALGQYYFDNLHSGSYIVKFEVPTRY. Residues 2292–2345 enclose the CNA-B 8 domain; sequence VPNVTVEIFNPTGQQVYNINELLIGSTTTDSNGYYLFDEIQPGSYIIKFSNIPN. The region spanning 2453–2477 is the CNA-B 9 domain; it reads NTTTTDQNGLYYFDNLSPGLYKLLF. The CNA-B 10 domain maps to 2713 to 2766; that stretch reads VNGTIVTLLDINGNTMVDADSYPINSYTTGPDGYYKFDDFSFGKYIITFSGVPD. The region spanning 2984 to 3061 is the CNA-B 11 domain; it reads LGGVVVTLYN…DSNASPVDGY (78 aa). N3083, N3130, N3372, N3390, N3459, N3466, N3557, N3666, N3676, and N3681 each carry an N-linked (GlcNAc...) asparagine glycan. Residues 3128–3201 form the CNA-B 12 domain; sequence YPNITVSIYT…TKTGVNLGII (74 aa). The 70-residue stretch at 3664-3733 folds into the CNA-B 13 domain; it reads MANITVQLFS…NDKRDLEKIN (70 aa).

It belongs to the serine-aspartate repeat-containing protein (SDr) family.

It is found in the secreted. This Dictyostelium discoideum (Social amoeba) protein is Colossin-B (colB).